The chain runs to 318 residues: ATP phosphoribosyltransferase regulatory subunit (318 aa).

The protein belongs to the class-II aminoacyl-tRNA synthetase family. HisZ subfamily. In terms of assembly, heteromultimer composed of HisG and HisZ subunits.

It is found in the cytoplasm. Its pathway is amino-acid biosynthesis; L-histidine biosynthesis; L-histidine from 5-phospho-alpha-D-ribose 1-diphosphate: step 1/9. Functionally, required for the first step of histidine biosynthesis. May allow the feedback regulation of ATP phosphoribosyltransferase activity by histidine. This chain is ATP phosphoribosyltransferase regulatory subunit, found in Lactococcus lactis subsp. cremoris (strain MG1363).